The primary structure comprises 198 residues: Synaptobrevin homolog YKT6-A (198 aa).

In terms of domain architecture, Longin spans 8-127; sequence VLYKGENKVH…IQYNALDSYL (120 aa). In terms of domain architecture, v-SNARE coiled-coil homology spans 138-198; it reads PMSKVQAELD…RKQNSCCDIM (61 aa). A lipid anchor (S-palmitoyl cysteine) is attached at C194. The residue at position 195 (C195) is a Cysteine methyl ester. The S-farnesyl cysteine moiety is linked to residue C195. A propeptide spans 196–198 (removed in mature form); sequence DIM.

This sequence belongs to the synaptobrevin family. Palmitoylated; catalyzes its own palmitoylation. Palmitoylation is required for Golgi targeting. Post-translationally, farnesylation is required for Golgi targeting.

Its subcellular location is the cytoplasm. The protein localises to the cytosol. The protein resides in the cytoplasmic vesicle membrane. It is found in the golgi apparatus membrane. Its function is as follows. Vesicular soluble NSF attachment protein receptor (v-SNARE) mediating vesicle docking and fusion to a specific acceptor cellular compartment. Functions in endoplasmic reticulum to Golgi transport; as part of a SNARE complex composed of GOSR1, GOSR2 and STX5. Functions in early/recycling endosome to TGN transport; as part of a SNARE complex composed of BET1L, GOSR1 and STX5. Has a S-palmitoyl transferase activity. The sequence is that of Synaptobrevin homolog YKT6-A (ykt6-a) from Xenopus laevis (African clawed frog).